Reading from the N-terminus, the 210-residue chain is Glutathione S-transferase P (210 aa).

In terms of domain architecture, GST N-terminal spans 2 to 81 (PPYTVVYFPV…HLGRTLGLYG (80 aa)). Tyr-4 is subject to Phosphotyrosine; by EGFR. Glutathione is bound by residues Tyr-8, Arg-14, Trp-39, Lys-45, and 52-53 (QL). Residue Thr-62 is modified to Phosphothreonine. A glutathione-binding site is contributed by 65–66 (QS). A GST C-terminal domain is found at 83 to 204 (DQQEAALVDM…ASPEYVNLPI (122 aa)). N6-succinyllysine occurs at positions 103 and 116. Lys-128 carries the post-translational modification N6-acetyllysine. Position 199 is a phosphotyrosine; by EGFR (Tyr-199).

It belongs to the GST superfamily. Pi family. Homodimer. Interacts with CDK5.

Its subcellular location is the cytoplasm. It localises to the mitochondrion. The protein localises to the nucleus. The catalysed reaction is RX + glutathione = an S-substituted glutathione + a halide anion + H(+). It catalyses the reaction prostaglandin J2 + glutathione = prostaglandin J2-S-(R)-glutathione. The enzyme catalyses prostaglandin J2 + glutathione = prostaglandin J2-S-(S)-glutathione. It carries out the reaction prostaglandin A2 + glutathione = prostaglandin A2-S-(S)-glutathione. The catalysed reaction is 11(S)-hydroxy-14(S),15(S)-epoxy-(5Z,8Z,12E)-eicosatrienoate + glutathione = (11S,15S)-dihydroxy-14(R)-S-glutathionyl-(5Z,8Z,12E)-eicosatrienoate. Functionally, conjugation of reduced glutathione to a wide number of exogenous and endogenous hydrophobic electrophiles. Involved in the formation of glutathione conjugates of both prostaglandin A2 (PGA2) and prostaglandin J2 (PGJ2). Participates in the formation of novel hepoxilin regioisomers. Negatively regulates CDK5 activity via p25/p35 translocation to prevent neurodegeneration. The polypeptide is Glutathione S-transferase P (Homo sapiens (Human)).